We begin with the raw amino-acid sequence, 445 residues long: Exodeoxyribonuclease 7 large subunit (445 aa).

Belongs to the XseA family. Heterooligomer composed of large and small subunits.

The protein resides in the cytoplasm. It catalyses the reaction Exonucleolytic cleavage in either 5'- to 3'- or 3'- to 5'-direction to yield nucleoside 5'-phosphates.. Bidirectionally degrades single-stranded DNA into large acid-insoluble oligonucleotides, which are then degraded further into small acid-soluble oligonucleotides. The chain is Exodeoxyribonuclease 7 large subunit from Staphylococcus aureus (strain bovine RF122 / ET3-1).